Here is a 507-residue protein sequence, read N- to C-terminus: MNKVPLLEMRNITKSFGKFQALKGVDLTVFSGEIHALMGENGAGKSTLMKILAGAYTTTSGEILIEGRPWSIKGPKDALNAGISLIYQEMQLAPNLTVAENIFLGSELSRGGLVQRKEMVMQTQAVIDRLGAQFKASDLVMGLTIAEQQQVEIARALHRNSRILVMDEPTAALSTRETHRLFELILRLRDEGMAIIYISHRMAEVYELSDRVSVLRDGQYVGSLMRANLNANELVRMMVGRPLSDLFNKERDIPLGHLRLKVHHLTDGAKVQAVSLQVRSGEIVGLAGLVGAGRSELAQLIFGVRKATGGTIEIDGVPLVIHSPREAIRHGIGFLTENRKEQGLFLELAAQDNITMATLERDACYGLLDRKKARAISDDAINRLNIRVPHAQVRAGGLSGGNQQKLLISRWVAISPRILILDEPTRGVDVGAKSEIYRIMSQMAREGVAILMISSELPEVVGMSDRVYVMHEGRIAGELHHPDITQENIMTLATGVTEDHKKEVYHD.

2 ABC transporter domains span residues 7–242 (LEMR…VGRP) and 253–497 (IPLG…TGVT). Residue 39-46 (GENGAGKS) coordinates ATP.

It belongs to the ABC transporter superfamily. Ribose importer (TC 3.A.1.2.1) family. As to quaternary structure, the complex is composed of an ATP-binding protein (RbsA), two transmembrane proteins (RbsC) and a solute-binding protein (RbsB).

It is found in the cell inner membrane. The catalysed reaction is D-ribose(out) + ATP + H2O = D-ribose(in) + ADP + phosphate + H(+). Part of the ABC transporter complex RbsABC involved in ribose import. Responsible for energy coupling to the transport system. The chain is Ribose import ATP-binding protein RbsA from Yersinia pestis bv. Antiqua (strain Antiqua).